We begin with the raw amino-acid sequence, 491 residues long: Cytochrome P450 2H1 (491 aa).

A heme-binding site is contributed by C436.

Belongs to the cytochrome P450 family. Heme serves as cofactor. In terms of tissue distribution, expressed in liver.

Its subcellular location is the endoplasmic reticulum membrane. It is found in the microsome membrane. The enzyme catalyses an organic molecule + reduced [NADPH--hemoprotein reductase] + O2 = an alcohol + oxidized [NADPH--hemoprotein reductase] + H2O + H(+). Functionally, cytochromes P450 are a group of heme-thiolate monooxygenases. In liver microsomes, this enzyme is involved in an NADPH-dependent electron transport pathway. It oxidizes a variety of structurally unrelated compounds, including steroids, fatty acids, and xenobiotics. The polypeptide is Cytochrome P450 2H1 (CYP2H1) (Gallus gallus (Chicken)).